A 455-amino-acid chain; its full sequence is MRLLAWLIFLANWGGARAEPGKFWHIADLHLDPDYKVSKDPFQVCPSAGSQPVPDAGPWGDYLCDSPWALINSSIYAMKEIEPEPDFILWTGDDTPHVPDEKLGEAAVLEIVERLTKLIREVFPDTKVYAALGNHDFHPKNQFPAGSNNIYNQIAELWKPWLSNESIALFKKGAFYCEKLPGPSGAGRIVVLNTNLYYTSNALTADMADPGQQFQWLEDVLTDASKAGDMVYIVGHVPPGFFEKTQNKAWFREGFNEKYLKVVRKHHRVIAGQFFGHHHTDSFRMLYDDAGVPISAMFITPGVTPWKTTLPGVVNGANNPAIRVFEYDRATLSLKDMVTYFMNLSQANAQGTPRWELEYQLTEAYGVPDASAHSMHTVLDRIAGDQSTLQRYYVYNSVSYSAGVCDEACSMQHVCAMRQVDIDAYTTCLYASGTTPVPQLPLLLMALLGLCTLVL.

The N-terminal stretch at 1-18 is a signal peptide; sequence MRLLAWLIFLANWGGARA. Positions 28 and 30 each coordinate Zn(2+). Cys-45 and Cys-64 are joined by a disulfide. Asn-72 is a glycosylation site (N-linked (GlcNAc...) asparagine). Residues Asp-93 and Asn-134 each coordinate Zn(2+). The N-linked (GlcNAc...) asparagine glycan is linked to Asn-164. His-236, His-277, and His-279 together coordinate Zn(2+). N-linked (GlcNAc...) asparagine glycosylation is present at Asn-343. Cystine bridges form between Cys-405–Cys-409 and Cys-415–Cys-428.

The protein belongs to the acid sphingomyelinase family. As to quaternary structure, interacts with TLR4, TLR7, TLR8 and TLR9. Requires Zn(2+) as cofactor. Post-translationally, N-glycosylated.

Its subcellular location is the secreted. It localises to the cell membrane. In terms of biological role, lipid-modulating phosphodiesterase. Active on the surface of macrophages and dendritic cells and strongly influences macrophage lipid composition and membrane fluidity. Acts as a negative regulator of Toll-like receptor signaling. Has in vitro phosphodiesterase activity, but the physiological substrate is unknown. Lacks activity with phosphocholine-containing lipids, but can cleave CDP-choline, and can release phosphate from ATP and ADP (in vitro). This chain is Acid sphingomyelinase-like phosphodiesterase 3b (SMPDL3B), found in Homo sapiens (Human).